The primary structure comprises 143 residues: Peptide methionine sulfoxide reductase MsrB (143 aa).

Positions 16–139 (DAELRRRLTP…NSAALNFESR (124 aa)) constitute a MsrB domain. 4 residues coordinate Zn(2+): Cys55, Cys58, Cys104, and Cys107. Cys128 serves as the catalytic Nucleophile.

The protein belongs to the MsrB Met sulfoxide reductase family. It depends on Zn(2+) as a cofactor.

The enzyme catalyses L-methionyl-[protein] + [thioredoxin]-disulfide + H2O = L-methionyl-(R)-S-oxide-[protein] + [thioredoxin]-dithiol. The chain is Peptide methionine sulfoxide reductase MsrB from Burkholderia multivorans (strain ATCC 17616 / 249).